The primary structure comprises 197 residues: ATP-dependent Clp protease proteolytic subunit 1 (197 aa).

Residue Ser88 is the Nucleophile of the active site. His113 is an active-site residue.

It belongs to the peptidase S14 family. Fourteen ClpP subunits assemble into 2 heptameric rings which stack back to back to give a disk-like structure with a central cavity, resembling the structure of eukaryotic proteasomes.

The protein localises to the cytoplasm. It catalyses the reaction Hydrolysis of proteins to small peptides in the presence of ATP and magnesium. alpha-casein is the usual test substrate. In the absence of ATP, only oligopeptides shorter than five residues are hydrolyzed (such as succinyl-Leu-Tyr-|-NHMec, and Leu-Tyr-Leu-|-Tyr-Trp, in which cleavage of the -Tyr-|-Leu- and -Tyr-|-Trp bonds also occurs).. In terms of biological role, cleaves peptides in various proteins in a process that requires ATP hydrolysis. Has a chymotrypsin-like activity. Plays a major role in the degradation of misfolded proteins. The protein is ATP-dependent Clp protease proteolytic subunit 1 of Leifsonia xyli subsp. xyli (strain CTCB07).